Reading from the N-terminus, the 287-residue chain is Troponin T, cardiac muscle (287 aa).

Acidic residues-rich tracts occupy residues 1–31 (MSDV…EEAG) and 44–59 (EDGE…DGPV). Disordered stretches follow at residues 1–85 (MSDV…GERV) and 124–208 (KDRI…EKKK). Residue Ser2 is modified to N-acetylserine. Ser2 bears the Phosphoserine; by CK2 mark. The segment covering 66–79 (APGPFMPNLVPPKI) has biased composition (pro residues). Basic and acidic residues-rich tracts occupy residues 124–173 (KDRI…DEAR) and 192–208 (QAER…EKKK). Ser197 bears the Phosphoserine; by PKC/PRKCA mark. Thr202 is modified (phosphothreonine; by PKC/PRKCA and RAF1). At Thr283 the chain carries Phosphothreonine; by PKC/PRKCA.

It belongs to the troponin T family. Phosphorylation at Thr-202 by PRKCA induces significant reduction in myofilament calcium sensitivity and actomyosin ATPase activity.

Functionally, troponin T is the tropomyosin-binding subunit of troponin, the thin filament regulatory complex which confers calcium-sensitivity to striated muscle actomyosin ATPase activity. The sequence is that of Troponin T, cardiac muscle (TNNT2) from Ovis aries (Sheep).